The following is a 303-amino-acid chain: Cytochrome c oxidase subunit 2 (303 aa).

An N-terminal signal peptide occupies residues 1–25 (MRHSTTLTGCATGAAGLLAATAAAA). The next 2 helical transmembrane spans lie at 60-80 (FILV…LYAV) and 104-124 (WTIV…PVLF). Residues His-217, Cys-252, Cys-256, and His-260 each contribute to the Cu cation site.

The protein belongs to the cytochrome c oxidase subunit 2 family. Cu cation serves as cofactor.

The protein resides in the cell membrane. It catalyses the reaction 4 Fe(II)-[cytochrome c] + O2 + 8 H(+)(in) = 4 Fe(III)-[cytochrome c] + 2 H2O + 4 H(+)(out). Subunits I and II form the functional core of the enzyme complex. Electrons originating in cytochrome c are transferred via heme a and Cu(A) to the binuclear center formed by heme a3 and Cu(B). The polypeptide is Cytochrome c oxidase subunit 2 (ctaC) (Cereibacter sphaeroides (Rhodobacter sphaeroides)).